The following is a 276-amino-acid chain: MALVKTKPTSPGRRSMVKVVNKDLHKGAPHAPLLEKQFQKSGRNNNGHITTRHKGGGHKHHYRVVDFKRNDKDGIPARVERLEYDPNRSANIALVLFADGERRYIIATKGMVAGQPLMNGSEAPIKAGNNLPIRNIPVGTTINNVEMLPGKGSQIARAAGGSAVLLAREGLYAQVRLRSGEVRRVHIECRATIGEVGNEEHSLRVIGKAGATRWRGIRPTVRGVVMNPVDHPHGGGEGKTAAGRDPVSPWGTPAKGYRTRSNKRTDSMIVQKRHKR.

2 disordered regions span residues 38 to 59 (FQKS…GGHK) and 225 to 276 (VMNP…RHKR). Positions 39 to 49 (QKSGRNNNGHI) are enriched in polar residues. Basic residues predominate over residues 50-59 (TTRHKGGGHK).

This sequence belongs to the universal ribosomal protein uL2 family. Part of the 50S ribosomal subunit. Forms a bridge to the 30S subunit in the 70S ribosome.

In terms of biological role, one of the primary rRNA binding proteins. Required for association of the 30S and 50S subunits to form the 70S ribosome, for tRNA binding and peptide bond formation. It has been suggested to have peptidyltransferase activity; this is somewhat controversial. Makes several contacts with the 16S rRNA in the 70S ribosome. This is Large ribosomal subunit protein uL2 from Cupriavidus necator (strain ATCC 17699 / DSM 428 / KCTC 22496 / NCIMB 10442 / H16 / Stanier 337) (Ralstonia eutropha).